A 220-amino-acid polypeptide reads, in one-letter code: Imidazoleglycerol-phosphate dehydratase (220 aa).

Residues glutamate 14, 64-72 (HMIHALAKH), 90-94 (HHTTE), arginine 116, and arginine 138 contribute to the substrate site. Residues histidine 64, histidine 90, histidine 91, and glutamate 94 each coordinate Mn(2+). Mn(2+)-binding residues include histidine 162, histidine 186, histidine 187, and glutamate 190. Substrate contacts are provided by residues 186-194 (HHRSESAFK) and 214-216 (STK).

The protein belongs to the imidazoleglycerol-phosphate dehydratase family. It depends on Mn(2+) as a cofactor.

It carries out the reaction D-erythro-1-(imidazol-4-yl)glycerol 3-phosphate = 3-(imidazol-4-yl)-2-oxopropyl phosphate + H2O. The protein operates within amino-acid biosynthesis; L-histidine biosynthesis; L-histidine from 5-phospho-alpha-D-ribose 1-diphosphate: step 6/9. The sequence is that of Imidazoleglycerol-phosphate dehydratase from Saccharomyces cerevisiae (strain ATCC 204508 / S288c) (Baker's yeast).